We begin with the raw amino-acid sequence, 446 residues long: Na(+)-translocating NADH-quinone reductase subunit A (446 aa).

Belongs to the NqrA family. In terms of assembly, composed of six subunits; NqrA, NqrB, NqrC, NqrD, NqrE and NqrF.

It carries out the reaction a ubiquinone + n Na(+)(in) + NADH + H(+) = a ubiquinol + n Na(+)(out) + NAD(+). Its function is as follows. NQR complex catalyzes the reduction of ubiquinone-1 to ubiquinol by two successive reactions, coupled with the transport of Na(+) ions from the cytoplasm to the periplasm. NqrA to NqrE are probably involved in the second step, the conversion of ubisemiquinone to ubiquinol. The chain is Na(+)-translocating NADH-quinone reductase subunit A from Vibrio vulnificus (strain CMCP6).